A 354-amino-acid polypeptide reads, in one-letter code: UDP-glucose 4-epimerase GEPI42 (354 aa).

Residue 11-42 (TILVTGGAGFIGSHTVVQLLKQGFHVSIIDNL) participates in NAD(+) binding. Serine 137 provides a ligand contact to substrate. Tyrosine 161 functions as the Proton acceptor in the catalytic mechanism.

The protein belongs to the NAD(P)-dependent epimerase/dehydratase family. Requires NAD(+) as cofactor.

The enzyme catalyses UDP-alpha-D-glucose = UDP-alpha-D-galactose. It participates in carbohydrate metabolism; galactose metabolism. The polypeptide is UDP-glucose 4-epimerase GEPI42 (Cyamopsis tetragonoloba (Guar)).